Reading from the N-terminus, the 291-residue chain is Probable 2-(5''-triphosphoribosyl)-3'-dephosphocoenzyme-A synthase (291 aa).

This sequence belongs to the CitG/MdcB family.

It catalyses the reaction 3'-dephospho-CoA + ATP = 2'-(5''-triphospho-alpha-D-ribosyl)-3'-dephospho-CoA + adenine. In terms of biological role, involved in the formation of 2-(5''-phosphoribosyl)-3'-dephosphocoenzyme-A, the prosthetic group of the acyl-carrier protein of the malonate decarboxylase. The sequence is that of Probable 2-(5''-triphosphoribosyl)-3'-dephosphocoenzyme-A synthase from Pseudomonas savastanoi pv. phaseolicola (strain 1448A / Race 6) (Pseudomonas syringae pv. phaseolicola (strain 1448A / Race 6)).